A 530-amino-acid polypeptide reads, in one-letter code: Cation channel sperm-associated protein 2 (530 aa).

Over 1 to 108 (MAAYQQEEQM…LWAGWVLECP (108 aa)) the chain is Cytoplasmic. A helical transmembrane segment spans residues 109–131 (LFKNFIIFLVFLNTIILMVEIEL). The Extracellular segment spans residues 132–140 (LESTNTKLW). A helical transmembrane segment spans residues 141 to 166 (PLKLTLEVAAWFILLIFILEILLKWL). The Cytoplasmic segment spans residues 167-175 (SNFSVFWKS). Residues 176 to 200 (AWNVFDFVVTMLSLLPEVVVLVGVT) form a helical membrane-spanning segment. At 201–203 (GQS) the chain is on the extracellular side. The chain crosses the membrane as a helical span at residues 204 to 222 (VWLQLLRICRVLRSLKLLA). Residues 223–239 (QFRQIQIIILVLVRALK) lie on the Cytoplasmic side of the membrane. A helical transmembrane segment spans residues 240–262 (SMTFLLMLLLIFFYIFAVTGVYV). The Extracellular portion of the chain corresponds to 263-281 (FSEYTRSPRQDLEYHVFFS). Positions 282-294 (DLPNSLVTVFILF) form an intramembrane region, helical; Pore-forming. Over 295 to 314 (TLDHWYALLQDVWKVPEVSR) the chain is Extracellular. The helical transmembrane segment at 315-341 (IFSSIYFILWLLLGSIIFRSIIVAMMV) threads the bilayer. At 342–530 (TNFQNIRKEL…VQALMNLEDK (189 aa)) the chain is on the cytoplasmic side. Residues 378-458 (MSHEALTSSH…TSSSYSSSSE (81 aa)) are disordered. A compositionally biased stretch (basic and acidic residues) spans 429–440 (KTEETLSKKREY). Over residues 442 to 458 (SSSCVSSTSSSYSSSSE) the composition is skewed to low complexity.

It belongs to the cation channel sperm-associated (TC 1.A.1.19) family. In terms of assembly, component of the CatSper complex or CatSpermasome composed of the core pore-forming members CATSPER1, CATSPER2, CATSPER3 and CATSPER4 as well as auxiliary members CATSPERB, CATSPERG, CATSPERD, CATSPERE, CATSPERZ, C2CD6/CATSPERT, TMEM249, TMEM262 and EFCAB9. HSPA1 may be an additional auxiliary complex member. The core complex members CATSPER1, CATSPER2, CATSPER3 and CATSPER4 form a heterotetrameric channel. The auxiliary CATSPERB, CATSPERG, CATSPERD and CATSPERE subunits form a pavilion-like structure over the pore which stabilizes the complex through interactions with CATSPER4, CATSPER3, CATSPER1 and CATSPER2 respectively. TMEM262/CATSPERH interacts with CATSPERB, further stabilizing the complex. C2CD6/CATSPERT interacts at least with CATSPERD and is required for targeting the CatSper complex in the flagellar membrane. Interacts with Ca(v)3.3/CACNA1I, leading to suppression of T-type calcium channel activity. As to expression, testis-specific.

Its subcellular location is the cell projection. The protein resides in the cilium. The protein localises to the flagellum membrane. It carries out the reaction Ca(2+)(in) = Ca(2+)(out). With respect to regulation, the CatSper calcium channel is indirectly activated by extracellular progesterone and prostaglandins following the sequence: progesterone &gt; PGF1-alpha = PGE1 &gt; PGA1 &gt; PGE2 &gt;&gt; PGD2. The CatSper calcium channel is directly inhibited by endocannabinoid 2-arachidonoylglycerol (2AG). Indirect activation by progesterone takes place via the following mechanism: progesterone binds and activates the acylglycerol lipase ABHD2, which in turn mediates hydrolysis of 2AG inhibitor, relieving inhibition of the CatSper channel. The primary effect of progesterone activation is to shift voltage dependence towards more physiological, negative membrane potentials; it is not mediated by metabotropic receptors and second messengers. Sperm capacitation enhances the effect of progesterone by providing additional negative shift. Also activated by the elevation of intracellular pH. Pore-forming subunit of the CatSper complex, a sperm-specific voltage-gated calcium channel, that plays a central role in calcium-dependent physiological responses essential for successful fertilization, such as sperm hyperactivation, acrosome reaction and chemotaxis towards the oocyte. The protein is Cation channel sperm-associated protein 2 (CATSPER2) of Homo sapiens (Human).